The following is a 255-amino-acid chain: Folate receptor beta (255 aa).

An N-terminal signal peptide occupies residues 1 to 16 (MVWKWMPLLLLLVCVA). Intrachain disulfides connect Cys-31/Cys-59, Cys-51/Cys-99, Cys-60/Cys-103, Cys-83/Cys-169, Cys-90/Cys-140, Cys-129/Cys-203, Cys-133/Cys-183, and Cys-146/Cys-163. Folate is bound by residues Asp-97 and Tyr-101. Asn-115 carries N-linked (GlcNAc...) asparagine glycosylation. Residues 118 to 122 (WRKER), 151 to 156 (HRGWDW), and Ser-190 contribute to the folate site. N-linked (GlcNAc...) asparagine glycosylation occurs at Asn-195. Asn-230 is lipidated: GPI-anchor amidated asparagine. Residues 231–255 (AGEMLHGTGGLLLSLALMLQLWLLG) constitute a propeptide, removed in mature form.

Belongs to the folate receptor family. In terms of processing, N-glycosylated. Expressed in placenta and hematopoietic cells. Expression is increased in malignant tissues.

The protein localises to the cell membrane. It localises to the secreted. Functionally, binds to folate and reduced folic acid derivatives and mediates delivery of 5-methyltetrahydrofolate and folate analogs into the interior of cells. Has high affinity for folate and folic acid analogs at neutral pH. Exposure to slightly acidic pH after receptor endocytosis triggers a conformation change that strongly reduces its affinity for folates and mediates their release. The chain is Folate receptor beta (FOLR2) from Homo sapiens (Human).